Here is a 164-residue protein sequence, read N- to C-terminus: Large ribosomal subunit protein eL21x/eL21w (164 aa).

Belongs to the eukaryotic ribosomal protein eL21 family.

This chain is Large ribosomal subunit protein eL21x/eL21w (RPL21E), found in Arabidopsis thaliana (Mouse-ear cress).